The sequence spans 435 residues: ATP-dependent protease ATPase subunit HslU (435 aa).

ATP contacts are provided by residues isoleucine 18, 60 to 65 (GVGKTE), aspartate 248, glutamate 313, and arginine 385.

It belongs to the ClpX chaperone family. HslU subfamily. As to quaternary structure, a double ring-shaped homohexamer of HslV is capped on each side by a ring-shaped HslU homohexamer. The assembly of the HslU/HslV complex is dependent on binding of ATP.

The protein localises to the cytoplasm. ATPase subunit of a proteasome-like degradation complex; this subunit has chaperone activity. The binding of ATP and its subsequent hydrolysis by HslU are essential for unfolding of protein substrates subsequently hydrolyzed by HslV. HslU recognizes the N-terminal part of its protein substrates and unfolds these before they are guided to HslV for hydrolysis. The sequence is that of ATP-dependent protease ATPase subunit HslU from Rhizobium etli (strain ATCC 51251 / DSM 11541 / JCM 21823 / NBRC 15573 / CFN 42).